The sequence spans 691 residues: Elongation factor G (691 aa).

The tr-type G domain maps to 8 to 283 (EDYRNFGIMA…AVVDFLPSPI (276 aa)). GTP-binding positions include 17-24 (AHIDAGKT), 81-85 (DTPGH), and 135-138 (NKMD).

It belongs to the TRAFAC class translation factor GTPase superfamily. Classic translation factor GTPase family. EF-G/EF-2 subfamily.

The protein resides in the cytoplasm. Functionally, catalyzes the GTP-dependent ribosomal translocation step during translation elongation. During this step, the ribosome changes from the pre-translocational (PRE) to the post-translocational (POST) state as the newly formed A-site-bound peptidyl-tRNA and P-site-bound deacylated tRNA move to the P and E sites, respectively. Catalyzes the coordinated movement of the two tRNA molecules, the mRNA and conformational changes in the ribosome. This is Elongation factor G from Xanthobacter autotrophicus (strain ATCC BAA-1158 / Py2).